The primary structure comprises 386 residues: Probable mannan endo-1,4-beta-mannosidase A (386 aa).

A signal peptide spans 1 to 21 (MKLNPSLLTAAGLVSAQLASA). Residues Trp-95 and Asn-207 each contribute to the substrate site. Catalysis depends on Glu-208, which acts as the Proton donor. Tyr-283 is a binding site for substrate. Glu-316 acts as the Nucleophile in catalysis. Asn-336 is a glycosylation site (N-linked (GlcNAc...) asparagine). Residue Trp-346 coordinates substrate.

It belongs to the glycosyl hydrolase 5 (cellulase A) family.

The protein localises to the secreted. The catalysed reaction is Random hydrolysis of (1-&gt;4)-beta-D-mannosidic linkages in mannans, galactomannans and glucomannans.. In terms of biological role, endo-1,4-mannanase, a crucial enzyme for depolymerization of seed galactomannans and wood galactoglucomannans. This is Probable mannan endo-1,4-beta-mannosidase A (manA) from Aspergillus oryzae (strain ATCC 42149 / RIB 40) (Yellow koji mold).